A 360-amino-acid polypeptide reads, in one-letter code: uncharacterized protein (360 aa).

Residues 4 to 235 (LSLQHIQKIY…PANMFVAGFI (232 aa)) form the ABC transporter domain. 37 to 44 (GPSGCGKS) contributes to the ATP binding site.

The protein belongs to the ABC transporter superfamily.

This is an uncharacterized protein from Escherichia coli O157:H7.